We begin with the raw amino-acid sequence, 62 residues long: Potassium channel toxin alpha-KTx 10.1 (62 aa).

The first 22 residues, 1 to 22 (MEGIAKITLILLFLFVTMHTFA), serve as a signal peptide directing secretion. The propeptide occupies 23 to 28 (NWNTEA). 3 cysteine pairs are disulfide-bonded: Cys-31–Cys-50, Cys-36–Cys-55, and Cys-40–Cys-57. Position 60 is a tyrosine amide (Tyr-60).

The protein belongs to the short scorpion toxin superfamily. Potassium channel inhibitor family. Alpha-KTx 10 subfamily. As to expression, expressed by the venom gland.

The protein resides in the secreted. Its function is as follows. Blocks Shaker B (Sh) and voltage-gated potassium-channels Kv1.1/KCNA1, Kv1.2/KCNA2, Kv1.3/KCNA3. Also inhibits small conductance calcium-activated potassium channels (KCNN) and intermediate conductance calcium-activated potassium channel (KCa3.1/KCNN4). The sequence is that of Potassium channel toxin alpha-KTx 10.1 from Centruroides noxius (Mexican scorpion).